The sequence spans 366 residues: Chorismate synthase (366 aa).

Residues Arg48 and Arg54 each coordinate NADP(+). Residues 125 to 127, 238 to 239, Gly278, 293 to 297, and Arg319 each bind FMN; these read RSS, NA, and KPTSS.

Belongs to the chorismate synthase family. As to quaternary structure, homotetramer. FMNH2 is required as a cofactor.

The enzyme catalyses 5-O-(1-carboxyvinyl)-3-phosphoshikimate = chorismate + phosphate. It participates in metabolic intermediate biosynthesis; chorismate biosynthesis; chorismate from D-erythrose 4-phosphate and phosphoenolpyruvate: step 7/7. Functionally, catalyzes the anti-1,4-elimination of the C-3 phosphate and the C-6 proR hydrogen from 5-enolpyruvylshikimate-3-phosphate (EPSP) to yield chorismate, which is the branch point compound that serves as the starting substrate for the three terminal pathways of aromatic amino acid biosynthesis. This reaction introduces a second double bond into the aromatic ring system. The polypeptide is Chorismate synthase (Thiobacillus denitrificans (strain ATCC 25259 / T1)).